We begin with the raw amino-acid sequence, 270 residues long: Putative phosphoenolpyruvate synthase regulatory protein (270 aa).

An ADP-binding site is contributed by 150 to 157 (GVSRCGKT).

The protein belongs to the pyruvate, phosphate/water dikinase regulatory protein family. PSRP subfamily.

It carries out the reaction [pyruvate, water dikinase] + ADP = [pyruvate, water dikinase]-phosphate + AMP + H(+). The catalysed reaction is [pyruvate, water dikinase]-phosphate + phosphate + H(+) = [pyruvate, water dikinase] + diphosphate. In terms of biological role, bifunctional serine/threonine kinase and phosphorylase involved in the regulation of the phosphoenolpyruvate synthase (PEPS) by catalyzing its phosphorylation/dephosphorylation. This Shewanella woodyi (strain ATCC 51908 / MS32) protein is Putative phosphoenolpyruvate synthase regulatory protein.